Reading from the N-terminus, the 329-residue chain is tRNA (cytidine(32)/guanosine(34)-2'-O)-methyltransferase (329 aa).

S-adenosyl-L-methionine is bound by residues G53, W55, D75, D91, and D116. The active-site Proton acceptor is the K156. The required for binding to WDR6 stretch occupies residues 221-240 (DFNQLDGPTRIIVPFVTCGD). The residue at position 271 (S271) is a Phosphoserine.

This sequence belongs to the class I-like SAM-binding methyltransferase superfamily. RNA methyltransferase RlmE family. TRM7 subfamily. As to quaternary structure, interacts with WDR6; the interaction is direct, and required for 2'-O-methylation of position 34 in substrate tRNAs. As to expression, found in fetal brain, lung, liver and kidney. Widely expressed in adult tissue; with high expression in heart and liver, lower expression in skeletal muscle, kidney, and pancreas and also lowly expressed in brain and lung. In the adult brain, expressed in amygdala, caudate nucleus, corpus callosum, hippocampus and thalamus.

Its subcellular location is the cytoplasm. It localises to the nucleus. It carries out the reaction cytidine(32)/guanosine(34) in tRNA + 2 S-adenosyl-L-methionine = 2'-O-methylcytidine(32)/2'-O-methylguanosine(34) in tRNA + 2 S-adenosyl-L-homocysteine + 2 H(+). Its activity is regulated as follows. Inhibited by 2,6-diaminopurine (DAP); inhibition promotes UGA stop-codon readthrough during translation by misincorporation of tRNA(Trp) in the nascent polypeptide. Methylates the 2'-O-ribose of nucleotides at positions 32 and 34 of the tRNA anticodon loop of substrate tRNAs. Requisite for faithful cytoplasmic translation. Requires THADA for methylation of the nucleotide at position 32 of the anticodon loop of substrate tRNAs. Requires WDR6 for methylation of the nucleotide at position 34 of the anticodon loop of substrate tRNAs. Promotes translation efficiency of the UUU codon. Plays a role in neurogenesis. Required for expression of genes involved in neurogenesis, mitochondrial translation and energy generation, and lipid biosynthesis. Requisite for RNA-mediated gene silencing. May modify position 32 in tRNA(Arg(ACG)), tRNA(Arg(CCG)), tRNA(Arg(UCG)), tRNA(Cys(GCA)), tRNA(Cys(ACA)), tRNA(Gln(CUG)), tRNA(Gln(UUG)), tRNA(Gly(CCC)), tRNA(Leu(CAG))/tRNA(Leu(CAA)), tRNA(Leu(A/IAG)), tRNA(Leu(UAG)), tRNA(Phe(GAA)), tRNA(Pro(AGG))/tRNA(Pro(CGG))/tRNA(Pro(UGG)) and tRNA(Trp(CCA)), and position 34 in tRNA(Phe(GAA)), tRNA(Leu(CAA)), tRNA(Sec(UCA)), and tRNA(Trp(CCA)). The protein is tRNA (cytidine(32)/guanosine(34)-2'-O)-methyltransferase of Homo sapiens (Human).